The sequence spans 226 residues: Protein TRI1 (226 aa).

Residues 1 to 56 (MADINKYIPMVDAILSVSNPDEISPKRVRKALQILYSVNLDSQRKLINELILERFG) form the DEK-C domain. Residues 83–118 (QKEEERPLRSTRKRKGKSESKSKRKKKKNDSPDSNS) are disordered. Positions 91-110 (RSTRKRKGKSESKSKRKKKK) are enriched in basic residues. At Ser113 the chain carries Phosphoserine. One can recognise an SWIB/MDM2 domain in the interval 119–195 (ISVRKVLLSA…NKLLTKHLFN (77 aa)). The segment covering 200–218 (VKHEEEQKQTPEKEIKLEN) has biased composition (basic and acidic residues). The interval 200–226 (VKHEEEQKQTPEKEIKLENESLPNLSG) is disordered. Glycyl lysine isopeptide (Lys-Gly) (interchain with G-Cter in SUMO) cross-links involve residues Lys201 and Lys215. At Ser225 the chain carries Phosphoserine.

It localises to the cytoplasm. It is found in the nucleus. Its subcellular location is the nucleolus. May be involved in transcription regulation. The protein is Protein TRI1 (TRI1) of Saccharomyces cerevisiae (strain ATCC 204508 / S288c) (Baker's yeast).